The chain runs to 286 residues: ATP synthase gamma chain (286 aa).

The protein belongs to the ATPase gamma chain family. As to quaternary structure, F-type ATPases have 2 components, CF(1) - the catalytic core - and CF(0) - the membrane proton channel. CF(1) has five subunits: alpha(3), beta(3), gamma(1), delta(1), epsilon(1). CF(0) has three main subunits: a, b and c.

Its subcellular location is the cell inner membrane. In terms of biological role, produces ATP from ADP in the presence of a proton gradient across the membrane. The gamma chain is believed to be important in regulating ATPase activity and the flow of protons through the CF(0) complex. The sequence is that of ATP synthase gamma chain from Shewanella amazonensis (strain ATCC BAA-1098 / SB2B).